We begin with the raw amino-acid sequence, 1209 residues long: Limbin (1209 aa).

Over 1 to 200 the chain is Extracellular; that stretch reads MKFSKEIEVF…VLPNHGLHAA (200 aa). N-linked (GlcNAc...) asparagine glycosylation is present at N120. The helical transmembrane segment at 201–221 threads the bilayer; that stretch reads GFCVAFILSLVLTWAVLFFMV. At 222–1209 the chain is on the cytoplasmic side; it reads RYQCVKGSSL…KKAAWALGLN (988 aa). 3 coiled-coil regions span residues 355 to 394, 553 to 697, and 920 to 1012; these read TAECDLETRKKTESQYQREMAAMEEAEEVLKRVSERSAVE, KQKL…EERD, and ELQE…METD. Basic and acidic residues predominate over residues 689-700; it reads ERLEGEERDRGQ. The disordered stretch occupies residues 689 to 714; the sequence is ERLEGEERDRGQEGVQSVRQRLKDDA.

Component of the EvC complex composed of EFCAB7, IQCE, EVC2 and EVC; built from two subcomplexes, EVC2:EVC and EFCAB7:IQCE. Interacts with EVC. Interacts (via N-terminal end) with EFCAB7. Interacts (via N-terminal end) with IQCE.

Its subcellular location is the cell membrane. It is found in the cytoplasm. The protein localises to the cytoskeleton. The protein resides in the cilium basal body. It localises to the cell projection. Its subcellular location is the cilium. It is found in the cilium membrane. The protein localises to the nucleus. In terms of biological role, component of the EvC complex that positively regulates ciliary Hedgehog (Hh) signaling. Plays a critical role in bone formation and skeletal development. May be involved in early embryonic morphogenesis. In Bos taurus (Bovine), this protein is Limbin (EVC2).